A 379-amino-acid polypeptide reads, in one-letter code: MSAIRYELIKTDKQTGARLGKIHTPHGTFDTPMFMPVGTLATVKTMSPEELKAMGAGIILSNTYHLWLRPGEELIREAGGLHKFMNWDQPILTDSGGFQVFSLSKMRDIKEEGVHFRNHLNGDKLFLSPEKAIQIQNALGSDIMMSFDECPPYPASHEYMKKSVERTSRWAERGLKAHERPEDQGLFGIVQGGAYEDLRAQSAKDLVSLDFPGYSIGGLSVGEPKDVMNRVLEHTTPLLPANKPRYLMGVGSPDSLIDGVIRGVDMFDCVLPTRIARNGTCMTSSGRLVIKNAKFTHDFRPIDENCDCYTCKNYSRAYIRHLIRCEETFGIRLTTYHNLHFLLNLMKQVRGAIMEDRLADFREEFFEQYGFNRPDAKNF.

Aspartate 94 functions as the Proton acceptor in the catalytic mechanism. Residues aspartate 94–phenylalanine 98, aspartate 148, glutamine 191, and glycine 218 contribute to the substrate site. The tract at residues glycine 249–serine 255 is RNA binding. Aspartate 268 functions as the Nucleophile in the catalytic mechanism. The tract at residues threonine 273–arginine 277 is RNA binding; important for wobble base 34 recognition. Residues cysteine 306, cysteine 308, cysteine 311, and histidine 337 each contribute to the Zn(2+) site.

This sequence belongs to the queuine tRNA-ribosyltransferase family. Homodimer. Within each dimer, one monomer is responsible for RNA recognition and catalysis, while the other monomer binds to the replacement base PreQ1. It depends on Zn(2+) as a cofactor.

The catalysed reaction is 7-aminomethyl-7-carbaguanine + guanosine(34) in tRNA = 7-aminomethyl-7-carbaguanosine(34) in tRNA + guanine. The protein operates within tRNA modification; tRNA-queuosine biosynthesis. In terms of biological role, catalyzes the base-exchange of a guanine (G) residue with the queuine precursor 7-aminomethyl-7-deazaguanine (PreQ1) at position 34 (anticodon wobble position) in tRNAs with GU(N) anticodons (tRNA-Asp, -Asn, -His and -Tyr). Catalysis occurs through a double-displacement mechanism. The nucleophile active site attacks the C1' of nucleotide 34 to detach the guanine base from the RNA, forming a covalent enzyme-RNA intermediate. The proton acceptor active site deprotonates the incoming PreQ1, allowing a nucleophilic attack on the C1' of the ribose to form the product. After dissociation, two additional enzymatic reactions on the tRNA convert PreQ1 to queuine (Q), resulting in the hypermodified nucleoside queuosine (7-(((4,5-cis-dihydroxy-2-cyclopenten-1-yl)amino)methyl)-7-deazaguanosine). This chain is Queuine tRNA-ribosyltransferase, found in Listeria monocytogenes serotype 4a (strain HCC23).